Consider the following 422-residue polypeptide: Tyrosine-protein kinase STYK1 (422 aa).

The chain crosses the membrane as a helical span at residues 26-46 (VIIVPTLLVTIFLILLGVILW). The Protein kinase domain occupies 114–384 (SEVLEQICSG…ELRLRLEAAI (271 aa)). ATP-binding positions include 120 to 128 (ICSGSCGPI) and Lys147. Catalysis depends on Asp251, which acts as the Proton acceptor.

The protein belongs to the protein kinase superfamily. Tyr protein kinase family. In terms of tissue distribution, widely expressed. Highly expressed in brain, placenta and prostate. Expressed in tumor cells such as hepatoma cells L-02, cervix carcinoma cells HeLa, ovary cancer cells Ho8910 and chronic myelogenous leukemia cells K-562, but not in other tumor cells such as epidermoid carcinoma (A-431). Undetectable in most normal lung tissues, widely expressed in lung cancers.

It is found in the membrane. The enzyme catalyses L-tyrosyl-[protein] + ATP = O-phospho-L-tyrosyl-[protein] + ADP + H(+). Functionally, probable tyrosine protein-kinase, which has strong transforming capabilities on a variety of cell lines. When overexpressed, it can also induce tumor cell invasion as well as metastasis in distant organs. May act by activating both MAP kinase and phosphatidylinositol 3'-kinases (PI3K) pathways. The polypeptide is Tyrosine-protein kinase STYK1 (STYK1) (Homo sapiens (Human)).